The sequence spans 329 residues: NAD kinase (329 aa).

The tract at residues 1-26 (MTTPGTDHNADQGADSGDKATKAASG) is disordered. Aspartate 104 functions as the Proton acceptor in the catalytic mechanism. Residues 104 to 105 (DG), arginine 109, 179 to 180 (NE), aspartate 209, and 220 to 225 (TAYAFS) contribute to the NAD(+) site.

It belongs to the NAD kinase family. A divalent metal cation serves as cofactor.

Its subcellular location is the cytoplasm. It carries out the reaction NAD(+) + ATP = ADP + NADP(+) + H(+). In terms of biological role, involved in the regulation of the intracellular balance of NAD and NADP, and is a key enzyme in the biosynthesis of NADP. Catalyzes specifically the phosphorylation on 2'-hydroxyl of the adenosine moiety of NAD to yield NADP. The chain is NAD kinase from Corynebacterium jeikeium (strain K411).